Consider the following 30-residue polypeptide: SCSGRDSRCPPVCCMGLMCSRGKCVSIYGE.

Intrachain disulfides connect Cys2–Cys14, Cys9–Cys19, and Cys13–Cys24. 2 positions are modified to 4-hydroxyproline: Pro10 and Pro11.

Three different forms of TVIIA exist. Pro-10 and Pro-11 of conotoxin TVIIA are hydroxylated in TVIIA, whereas Pro-10 is not hydroxylated in [Pro10]TVIIA and neither Pro-10 nor Pro-11 are hydroxylated in [Pro10,11]TVIIA. In terms of tissue distribution, expressed by the venom duct.

The protein resides in the secreted. Its function is as follows. By structural similarity with conotoxin GS, may inhibit the sodium channel (Nav). No effect was observed upon intracranial injections into mice and intraperitoneal injections into goldfish (25 ug). This is Conotoxin TVIIA from Conus tulipa (Fish-hunting cone snail).